An 80-amino-acid chain; its full sequence is MARKKTLDFEQSLTELQTLVERLESGELSLEESLGAFEQGIRLTRECQASLSQAEQKVQILLERDGELSEAPFDTEGDEA.

It belongs to the XseB family. Heterooligomer composed of large and small subunits.

The protein localises to the cytoplasm. The enzyme catalyses Exonucleolytic cleavage in either 5'- to 3'- or 3'- to 5'-direction to yield nucleoside 5'-phosphates.. In terms of biological role, bidirectionally degrades single-stranded DNA into large acid-insoluble oligonucleotides, which are then degraded further into small acid-soluble oligonucleotides. This chain is Exodeoxyribonuclease 7 small subunit, found in Pseudomonas paraeruginosa (strain DSM 24068 / PA7) (Pseudomonas aeruginosa (strain PA7)).